A 179-amino-acid chain; its full sequence is Large ribosomal subunit protein uL5 (179 aa).

The protein belongs to the universal ribosomal protein uL5 family. Part of the 50S ribosomal subunit; part of the 5S rRNA/L5/L18/L25 subcomplex. Contacts the 5S rRNA and the P site tRNA. Forms a bridge to the 30S subunit in the 70S ribosome.

In terms of biological role, this is one of the proteins that bind and probably mediate the attachment of the 5S RNA into the large ribosomal subunit, where it forms part of the central protuberance. In the 70S ribosome it contacts protein S13 of the 30S subunit (bridge B1b), connecting the 2 subunits; this bridge is implicated in subunit movement. Contacts the P site tRNA; the 5S rRNA and some of its associated proteins might help stabilize positioning of ribosome-bound tRNAs. The polypeptide is Large ribosomal subunit protein uL5 (Dichelobacter nodosus (strain VCS1703A)).